The chain runs to 495 residues: Neuronal acetylcholine receptor subunit beta-4 (495 aa).

The signal sequence occupies residues 1–20; it reads MRGTPLLLVSLFSLLQDGDC. Topologically, residues 21 to 235 are extracellular; sequence RLANAEEKLM…IIKRKPLFYT (215 aa). Residues N35, N92, N137, and N165 are each glycosylated (N-linked (GlcNAc...) asparagine). The cysteines at positions 152 and 166 are disulfide-linked. A helical membrane pass occupies residues 236–256; it reads INLIIPCVLITSLAILVFYLP. At 257 to 264 the chain is on the cytoplasmic side; sequence SDCGEKMT. E261 lines the Na(+) pocket. Residues 265 to 285 traverse the membrane as a helical segment; the sequence is LCISVLLALTFFLLLISKIVP. The Extracellular segment spans residues 286-297; that stretch reads PTSLDIPLIGKY. Residues 298-318 traverse the membrane as a helical segment; sequence LLFTMVLVTFSIVTTVCVLNV. Residues 319-463 lie on the Cytoplasmic side of the membrane; sequence HHRSPSTHTM…WKFVAMVVDR (145 aa). Residues 464–484 form a helical membrane-spanning segment; the sequence is LFLWVFVFVCILGTMGLFLPP. The Extracellular portion of the chain corresponds to 485–495; it reads LFQIHAPSKDS.

It belongs to the ligand-gated ion channel (TC 1.A.9) family. Acetylcholine receptor (TC 1.A.9.1) subfamily. Beta-4/CHRNB4 sub-subfamily. Neuronal AChR is composed of two different types of subunits: alpha and beta. CHRNB4/Beta-4 subunit can be combined to CHRNA2/alpha-2, CHRNA3/alpha-3 or CHRNA4/alpha-4, CHRNA5/alpha-5 and CHRNB3/beta-3 to give rise to functional receptors. Forms stoichiometries such as (CHRNA3)2:(CHRNB4)3 or (CHRNA3:CHRNB4)2:CHRNB3. Interacts with RIC3; which is required for proper folding and assembly. Interacts with LYPD6. In the brain, it is detected in the medial habenula. In the peripheral nervous system, it is found at least in the adrenal gland.

Its subcellular location is the synaptic cell membrane. The protein resides in the cell membrane. The enzyme catalyses Ca(2+)(in) = Ca(2+)(out). The catalysed reaction is K(+)(in) = K(+)(out). It carries out the reaction Na(+)(in) = Na(+)(out). Its activity is regulated as follows. Activated by a myriad of ligands such as acetylcholine, cytisine, nicotine, choline and epibatidine. nAChR activity is inhibited by the antagonist alpha-conotoxins BuIA and MII, small disulfide-constrained peptides from cone snails. The heteropentamer CHRNA3:CHRNB4 activity is blocked by the alpha-conotoxin ImI and AuIB. Its function is as follows. Component of neuronal acetylcholine receptors (nAChRs) that function as pentameric, ligand-gated cation channels with high calcium permeability among other activities. nAChRs are excitatory neurotrasnmitter receptors formed by a collection of nAChR subunits known to mediate synaptic transmission in the nervous system and the neuromuscular junction. Each nAchR subunit confers differential attributes to channel properties, including activation, deactivation and desensitization kinetics, pH sensitivity, cation permeability, and binding to allosteric modulators. CHRNB4 forms heteropentameric neuronal acetylcholine receptors with CHRNA2, CHRNA3 and CHRNA4, as well as CHRNA5 and CHRNB3 as accesory subunits. CHRNA3:CHRNB4 being predominant in neurons of the autonomic ganglia, it is known as ganglionic nicotinic receptor. CHRNA3:CHRNB4 or CHRNA3:CHRNA5:CHRNB4 play also an important role in the habenulo-interpeduncular tract, modulating the mesolimbic dopamine system and affecting reward circuits and addiction. Hypothalamic CHRNA3:CHRNB4 nAChR activation by nicotine leads to activation of POMC neurons and a decrease in food intake. The polypeptide is Neuronal acetylcholine receptor subunit beta-4 (Chrnb4) (Rattus norvegicus (Rat)).